Here is a 129-residue protein sequence, read N- to C-terminus: Translation initiation factor 5A (129 aa).

K36 carries the post-translational modification Hypusine.

It belongs to the eIF-5A family.

The protein localises to the cytoplasm. Functions by promoting the formation of the first peptide bond. The protein is Translation initiation factor 5A of Picrophilus torridus (strain ATCC 700027 / DSM 9790 / JCM 10055 / NBRC 100828 / KAW 2/3).